The primary structure comprises 86 residues: UPF0180 protein CA_C1486 (86 aa).

This sequence belongs to the UPF0180 family.

This Clostridium acetobutylicum (strain ATCC 824 / DSM 792 / JCM 1419 / IAM 19013 / LMG 5710 / NBRC 13948 / NRRL B-527 / VKM B-1787 / 2291 / W) protein is UPF0180 protein CA_C1486.